The following is a 207-amino-acid chain: Peptidyl-tRNA hydrolase (207 aa).

Tyr-30 lines the tRNA pocket. The active-site Proton acceptor is the His-35. Tyr-81, Asn-83, and Asn-129 together coordinate tRNA.

The protein belongs to the PTH family. As to quaternary structure, monomer.

It is found in the cytoplasm. The enzyme catalyses an N-acyl-L-alpha-aminoacyl-tRNA + H2O = an N-acyl-L-amino acid + a tRNA + H(+). In terms of biological role, hydrolyzes ribosome-free peptidyl-tRNAs (with 1 or more amino acids incorporated), which drop off the ribosome during protein synthesis, or as a result of ribosome stalling. Its function is as follows. Catalyzes the release of premature peptidyl moieties from peptidyl-tRNA molecules trapped in stalled 50S ribosomal subunits, and thus maintains levels of free tRNAs and 50S ribosomes. The protein is Peptidyl-tRNA hydrolase of Bordetella avium (strain 197N).